A 302-amino-acid chain; its full sequence is tRNA-cytidine(32) 2-sulfurtransferase (302 aa).

Residues 45-50 (SGGKDS) carry the PP-loop motif motif. Residues Cys-120, Cys-123, and Cys-211 each contribute to the [4Fe-4S] cluster site.

Belongs to the TtcA family. In terms of assembly, homodimer. Mg(2+) serves as cofactor. It depends on [4Fe-4S] cluster as a cofactor.

It is found in the cytoplasm. It carries out the reaction cytidine(32) in tRNA + S-sulfanyl-L-cysteinyl-[cysteine desulfurase] + AH2 + ATP = 2-thiocytidine(32) in tRNA + L-cysteinyl-[cysteine desulfurase] + A + AMP + diphosphate + H(+). Its pathway is tRNA modification. In terms of biological role, catalyzes the ATP-dependent 2-thiolation of cytidine in position 32 of tRNA, to form 2-thiocytidine (s(2)C32). The sulfur atoms are provided by the cysteine/cysteine desulfurase (IscS) system. The chain is tRNA-cytidine(32) 2-sulfurtransferase from Aeromonas hydrophila subsp. hydrophila (strain ATCC 7966 / DSM 30187 / BCRC 13018 / CCUG 14551 / JCM 1027 / KCTC 2358 / NCIMB 9240 / NCTC 8049).